The primary structure comprises 151 residues: Regulatory protein RecX (151 aa).

Belongs to the RecX family.

The protein resides in the cytoplasm. In terms of biological role, modulates RecA activity. The sequence is that of Regulatory protein RecX from Haemophilus ducreyi (strain 35000HP / ATCC 700724).